Consider the following 494-residue polypeptide: Alanine--glyoxylate aminotransferase 2-like (494 aa).

At K291 the chain carries N6-(pyridoxal phosphate)lysine.

Belongs to the class-III pyridoxal-phosphate-dependent aminotransferase family. Pyridoxal 5'-phosphate is required as a cofactor.

This Drosophila melanogaster (Fruit fly) protein is Alanine--glyoxylate aminotransferase 2-like.